The sequence spans 389 residues: Succinate--CoA ligase [ADP-forming] subunit beta (389 aa).

Residues Lys9–Glu244 enclose the ATP-grasp domain. Residues Lys46, Gly53–Gly55, Glu99, Cys102, and Glu107 contribute to the ATP site. The Mg(2+) site is built by Asn199 and Asp213. Residues Asn264 and Gly321 to Val323 contribute to the substrate site.

The protein belongs to the succinate/malate CoA ligase beta subunit family. In terms of assembly, heterotetramer of two alpha and two beta subunits. Requires Mg(2+) as cofactor.

It carries out the reaction succinate + ATP + CoA = succinyl-CoA + ADP + phosphate. The enzyme catalyses GTP + succinate + CoA = succinyl-CoA + GDP + phosphate. It functions in the pathway carbohydrate metabolism; tricarboxylic acid cycle; succinate from succinyl-CoA (ligase route): step 1/1. Functionally, succinyl-CoA synthetase functions in the citric acid cycle (TCA), coupling the hydrolysis of succinyl-CoA to the synthesis of either ATP or GTP and thus represents the only step of substrate-level phosphorylation in the TCA. The beta subunit provides nucleotide specificity of the enzyme and binds the substrate succinate, while the binding sites for coenzyme A and phosphate are found in the alpha subunit. This is Succinate--CoA ligase [ADP-forming] subunit beta from Haemophilus influenzae (strain ATCC 51907 / DSM 11121 / KW20 / Rd).